The sequence spans 822 residues: IQ and AAA domain-containing protein 1-like (822 aa).

Residues 206 to 235 (QDQGAIVIQKVWKGYLQRKRIEQDRRMEME) form the IQ domain. Over residues 338 to 363 (RQELEAQAQENKKKEQEKNKDKVKEK) the composition is skewed to basic and acidic residues. 2 disordered regions span residues 338–378 (RQEL…KAKK) and 457–484 (REET…KDLT). The segment covering 464 to 479 (KSPKKKGGKKSGKKKK) has biased composition (basic residues). Position 569–576 (569–576 (GPSGMGKK)) interacts with ATP.

The protein belongs to the AAA ATPase family.

In Rattus norvegicus (Rat), this protein is IQ and AAA domain-containing protein 1-like (Iqca1l).